The sequence spans 434 residues: Septin-6 (434 aa).

Ala2 carries the N-acetylalanine modification. Ser27 is modified (phosphoserine). A Septin-type G domain is found at 39–305; sequence QGFCFNILCV…ELYRRCKLEE (267 aa). The segment at 49 to 56 is G1 motif; the sequence is GETGLGKS. Residues 49–56, Gly104, 185–193, Gly239, and Arg254 each bind GTP; these read GETGLGKS and KSDAISKSE. Residues 101 to 104 form a G3 motif region; it reads STVG. Residues 184 to 187 form a G4 motif region; the sequence is AKSD. Positions 321-407 form a coiled coil; it reads QETYEAKRNE…QRKAAAELLQ (87 aa). Lys367 carries the N6-acetyllysine modification. Positions 403–434 are disordered; it reads AELLQSQGSQAGGSQTLKRDKEKKNNPWLCIE. The segment covering 407-417 has biased composition (low complexity); the sequence is QSQGSQAGGSQ. Phosphoserine is present on Ser416. A Phosphothreonine modification is found at Thr418.

It belongs to the TRAFAC class TrmE-Era-EngA-EngB-Septin-like GTPase superfamily. Septin GTPase family. As to quaternary structure, septins polymerize into heterooligomeric protein complexes that form filaments, and associate with cellular membranes, actin filaments and microtubules. GTPase activity is required for filament formation. Filaments are assembled from asymmetrical heterotrimers, composed of SEPTIN2, SEPTIN6 and SEPTIN7 that associate head-to-head to form a hexameric unit. Within the trimer, directly interacts with SEPTIN2 and SEPTIN7. Also interacts with SEPTIN9 and SEPTIN12. Interaction with SEPTIN12 alters filament structure. Component of a septin core octameric complex consisting of SEPTIN12, SEPTIN7, SEPTIN6 and SEPTIN2 or SEPTIN4 in the order 12-7-6-2-2-6-7-12 or 12-7-6-4-4-6-7-12 and located in the sperm annulus. Interacts with SOCS7. Interacts with HNRNPA1. Expressed in the cerebral cortex (at protein level). Associated with synaptic vesicles in various brain regions, including glomeruli of the olfactory bulb (at protein level).

The protein resides in the cytoplasm. It localises to the cytoskeleton. The protein localises to the spindle. It is found in the chromosome. Its subcellular location is the centromere. The protein resides in the kinetochore. It localises to the cleavage furrow. The protein localises to the midbody. It is found in the cell projection. Its subcellular location is the cilium. The protein resides in the flagellum. Its function is as follows. Filament-forming cytoskeletal GTPase. Required for normal organization of the actin cytoskeleton. Involved in cytokinesis. Forms a filamentous structure with SEPTIN12, SEPTIN6, SEPTIN2 and probably SEPTIN4 at the sperm annulus which is required for the structural integrity and motility of the sperm tail during postmeiotic differentiation. The protein is Septin-6 of Mus musculus (Mouse).